A 533-amino-acid chain; its full sequence is Retinoic acid receptor RXR-beta (533 aa).

The segment at 1–24 (MSWAARPPFLPQRHAAGQCGPVGV) is disordered. The interval 1-204 (MSWAARPPFL…PGGPGAGKRL (204 aa)) is modulating. Position 25 is an omega-N-methylarginine (R25). The interval 37 to 183 (RRRRPWLDPA…GPPEDVKPPV (147 aa)) is disordered. A compositionally biased stretch (low complexity) spans 46–61 (AAAAAAAAAAGEQQTP). A compositionally biased stretch (basic and acidic residues) spans 67–82 (EAGRDGMGDSGRDSRS). Positions 83–94 (PDSSSPNPLSQG) are enriched in low complexity. Pro residues-rich tracts occupy residues 95–109 (APPP…PPSS) and 118–129 (APPPPPMPPPQL). Over residues 130 to 143 (GSPFPVISSSMGSP) the composition is skewed to low complexity. A compositionally biased stretch (pro residues) spans 144–153 (GLPPPAPPGF). 2 NR C4-type zinc fingers span residues 205–225 (CAIC…CEGC) and 241–265 (CRDN…YQKC). Residues 205-270 (CAICGDRSSG…RYQKCLATGM (66 aa)) constitute a DNA-binding region (nuclear receptor). The segment at 271 to 295 (KREAVQEERQRGKDKDGDGEGAGGA) is hinge. Residues 276–288 (QEERQRGKDKDGD) show a composition bias toward basic and acidic residues. 2 disordered regions span residues 276–299 (QEER…PEEM) and 313–336 (QKSD…NDPV). Positions 296–529 (PEEMPVDRIL…TFLMEMLEAP (234 aa)) constitute an NR LBD domain. Gly residues predominate over residues 320 to 329 (EGPGGTGGSG).

This sequence belongs to the nuclear hormone receptor family. NR2 subfamily. In terms of assembly, homodimer (in vitro). Heterodimer with other retinoic acid receptor family members. Binds DNA preferentially as a RAR/RXR heterodimer. Interacts with NR1H3. Interacts with AKAP13.

The protein resides in the nucleus. The protein localises to the cytoplasm. In terms of biological role, receptor for retinoic acid. Retinoic acid receptors bind as heterodimers to their target response elements in response to their ligands, all-trans or 9-cis retinoic acid, and regulate gene expression in various biological processes. The RAR/RXR heterodimers bind to the retinoic acid response elements (RARE). The polypeptide is Retinoic acid receptor RXR-beta (RXRB) (Canis lupus familiaris (Dog)).